Reading from the N-terminus, the 152-residue chain is D-aminoacyl-tRNA deacylase (152 aa).

Positions 137 to 138 (GP) match the Gly-cisPro motif, important for rejection of L-amino acids motif.

This sequence belongs to the DTD family. Homodimer.

Its subcellular location is the cytoplasm. The catalysed reaction is glycyl-tRNA(Ala) + H2O = tRNA(Ala) + glycine + H(+). It carries out the reaction a D-aminoacyl-tRNA + H2O = a tRNA + a D-alpha-amino acid + H(+). An aminoacyl-tRNA editing enzyme that deacylates mischarged D-aminoacyl-tRNAs. Also deacylates mischarged glycyl-tRNA(Ala), protecting cells against glycine mischarging by AlaRS. Acts via tRNA-based rather than protein-based catalysis; rejects L-amino acids rather than detecting D-amino acids in the active site. By recycling D-aminoacyl-tRNA to D-amino acids and free tRNA molecules, this enzyme counteracts the toxicity associated with the formation of D-aminoacyl-tRNA entities in vivo and helps enforce protein L-homochirality. The sequence is that of D-aminoacyl-tRNA deacylase from Geobacter sulfurreducens (strain ATCC 51573 / DSM 12127 / PCA).